A 347-amino-acid polypeptide reads, in one-letter code: Heat-inducible transcription repressor HrcA (347 aa).

This sequence belongs to the HrcA family.

Functionally, negative regulator of class I heat shock genes (grpE-dnaK-dnaJ and groELS operons). Prevents heat-shock induction of these operons. The protein is Heat-inducible transcription repressor HrcA of Lactobacillus delbrueckii subsp. bulgaricus (strain ATCC BAA-365 / Lb-18).